Here is a 203-residue protein sequence, read N- to C-terminus: Secreted RxLR effector protein RXLR-C28 (203 aa).

The N-terminal stretch at 1-24 is a signal peptide; it reads MKAVKLTAAVVVLFMAPYVPITSS. Asn32 is a glycosylation site (N-linked (GlcNAc...) asparagine). The RxLR motif lies at 37–40; the sequence is RHLR. N-linked (GlcNAc...) asparagine glycosylation occurs at Asn193.

This sequence belongs to the RxLR effector family.

Its subcellular location is the secreted. It is found in the host cytoplasm. Functionally, secreted effector that does not suppress pattern-triggered immunity (PTI) in plant host. In Plasmopara halstedii (Downy mildew of sunflower), this protein is Secreted RxLR effector protein RXLR-C28.